We begin with the raw amino-acid sequence, 467 residues long: ATP synthase subunit beta (467 aa).

157-164 is an ATP binding site; the sequence is GGAGVGKT.

This sequence belongs to the ATPase alpha/beta chains family. As to quaternary structure, F-type ATPases have 2 components, CF(1) - the catalytic core - and CF(0) - the membrane proton channel. CF(1) has five subunits: alpha(3), beta(3), gamma(1), delta(1), epsilon(1). CF(0) has three main subunits: a(1), b(2) and c(9-12). The alpha and beta chains form an alternating ring which encloses part of the gamma chain. CF(1) is attached to CF(0) by a central stalk formed by the gamma and epsilon chains, while a peripheral stalk is formed by the delta and b chains.

The protein localises to the cell inner membrane. The enzyme catalyses ATP + H2O + 4 H(+)(in) = ADP + phosphate + 5 H(+)(out). Functionally, produces ATP from ADP in the presence of a proton gradient across the membrane. The catalytic sites are hosted primarily by the beta subunits. This chain is ATP synthase subunit beta, found in Desulfosudis oleivorans (strain DSM 6200 / JCM 39069 / Hxd3) (Desulfococcus oleovorans).